We begin with the raw amino-acid sequence, 231 residues long: Large ribosomal subunit protein uL1 (231 aa).

Belongs to the universal ribosomal protein uL1 family. Part of the 50S ribosomal subunit.

In terms of biological role, binds directly to 23S rRNA. The L1 stalk is quite mobile in the ribosome, and is involved in E site tRNA release. Its function is as follows. Protein L1 is also a translational repressor protein, it controls the translation of the L11 operon by binding to its mRNA. The sequence is that of Large ribosomal subunit protein uL1 from Halorhodospira halophila (strain DSM 244 / SL1) (Ectothiorhodospira halophila (strain DSM 244 / SL1)).